A 372-amino-acid polypeptide reads, in one-letter code: Forkhead box protein F1-B (372 aa).

A disordered region spans residues methionine 1–arginine 51. A compositionally biased stretch (low complexity) spans proline 13–alanine 22. A DNA-binding region (fork-head) is located at residues lysine 54–arginine 148.

As to expression, at the late gastrula stage, expressed in the presumptive ventrolateral mesoderm. During neurulation and tailbud stages, expressed in the lateral plate mesoderm and in the neural crest-derived structures of the head and branchial arches. During tailbud stages, expressed in the pronephros and pronephros ducts and in cells that migrate from the dorsolateral plate to the ventral region of the embryo (with the notable exception of the heart). These cells may represent hematopoietic or endothelial progenitor cells.

The protein localises to the nucleus. Probable transcription factor. Required for smooth muscle (visceral mesoderm) differentiation during gut development. Also required for normal proliferation of the lateral plate mesoderm. Acts as a downstream mediator of bmp4-signaling. The chain is Forkhead box protein F1-B (foxf1-b) from Xenopus laevis (African clawed frog).